A 336-amino-acid chain; its full sequence is Ornithine carbamoyltransferase, catabolic (336 aa).

Residues 57–60 (STRT), Gln-84, Arg-108, and 135–138 (HPTQ) each bind carbamoyl phosphate. L-ornithine is bound by residues Asn-168, Asp-232, and 236–237 (SM). Carbamoyl phosphate-binding positions include 274-275 (CL) and Arg-321.

It belongs to the aspartate/ornithine carbamoyltransferase superfamily. OTCase family.

The protein localises to the cytoplasm. The enzyme catalyses carbamoyl phosphate + L-ornithine = L-citrulline + phosphate + H(+). It participates in amino-acid degradation; L-arginine degradation via ADI pathway; carbamoyl phosphate from L-arginine: step 2/2. Reversibly catalyzes the transfer of the carbamoyl group from carbamoyl phosphate (CP) to the N(epsilon) atom of ornithine (ORN) to produce L-citrulline. The protein is Ornithine carbamoyltransferase, catabolic (arcB) of Pseudomonas putida (strain ATCC 47054 / DSM 6125 / CFBP 8728 / NCIMB 11950 / KT2440).